Here is a 422-residue protein sequence, read N- to C-terminus: Tyrosine--tRNA ligase 1 (422 aa).

Residue tyrosine 36 participates in L-tyrosine binding. A 'HIGH' region motif is present at residues 41-50; that stretch reads PTAGSLHIGH. The L-tyrosine site is built by tyrosine 173 and glutamine 177. Positions 233–237 match the 'KMSKS' region motif; it reads KFGKT. ATP is bound at residue lysine 236. The 65-residue stretch at 355–419 folds into the S4 RNA-binding domain; sequence SDVVTLLLET…GKKQFAMVKL (65 aa).

Belongs to the class-I aminoacyl-tRNA synthetase family. TyrS type 1 subfamily. Homodimer.

It localises to the cytoplasm. It carries out the reaction tRNA(Tyr) + L-tyrosine + ATP = L-tyrosyl-tRNA(Tyr) + AMP + diphosphate + H(+). Its function is as follows. Catalyzes the attachment of tyrosine to tRNA(Tyr) in a two-step reaction: tyrosine is first activated by ATP to form Tyr-AMP and then transferred to the acceptor end of tRNA(Tyr). The sequence is that of Tyrosine--tRNA ligase 1 from Vibrio vulnificus (strain CMCP6).